A 739-amino-acid polypeptide reads, in one-letter code: MGSNECPYSRQNANIGGGGQNNRDWWPDDLKLNILRQHNSVSNPLDKGFDYTAAFNSLDYFGLKRDLEALMTDSQDWWPADFGHYGGLFIRMAWHSAGTYRVFDGRGGGGQGQQRFAPLNSWPDNVSLDKARRLLWPIKQKYGSKISWADLLILAGNVALESMGFKTFGFAGGRSDTWEADQSVFWGGEKEWLGNDVRYLNGELDNPLAASHMGLIYVNPEGPNKNPDPVLAAKDIRITFGRMAMNDEETVALIAGGHTFGKTHGAGPATHLGKEPHGAGIELQGLGWESGFESGTGRHAITSGLEVIWTKTPTKWSNQFFEYLFKYDWELTKSPAGAHQYVAKGVEPFIPDPFDPSIKHPPRMLTTDLSLRYDPEYEKISRRFLENPDQFADAFARAWFKLTHRDVGPRVLYQGPEVPSEVLIWQDPVPPLDHPVIDNDDIATLKKAILNSGISHTDLFSTAWASASTFRGSDKRGGANGARIRLSPQKNWKVNSQPWLSESLAALEKIQKQFNDAQSTDKRVSLADLIVLAGAASLEKAARDAGHNVSVSFTPGRTDATQEQTDVDSFNNLEPIADGFRNYGRGTPRVLTEDFLIDKAQLLNLSPPELTVLIGGLRVLNNNYDRSNLGVFTKRPGQLTNDFFVNLLDMGVQWKPADDTNEIFIGSDRKTGQARWKASRADLVFGSHAELRAISEVYGSSDGEAKFVKDFVAAWEKVSNLDRFDLKQTGLAQRIKPQL.

Residues 1 to 20 are disordered; sequence MGSNECPYSRQNANIGGGGQ. Residues 94–217 constitute a cross-link (tryptophyl-tyrosyl-methioninium (Trp-Tyr) (with M-243)); the sequence is WHSAGTYRVF…LAASHMGLIY (124 aa). Catalysis depends on histidine 95, which acts as the Proton acceptor. A cross-link (tryptophyl-tyrosyl-methioninium (Tyr-Met) (with W-94)) is located at residues 217 to 243; it reads YVNPEGPNKNPDPVLAAKDIRITFGRM. Histidine 258 provides a ligand contact to heme b.

This sequence belongs to the peroxidase family. Peroxidase/catalase subfamily. Homodimer or homotetramer. Heme b serves as cofactor. In terms of processing, formation of the three residue Trp-Tyr-Met cross-link is important for the catalase, but not the peroxidase activity of the enzyme.

It localises to the cytoplasm. It catalyses the reaction H2O2 + AH2 = A + 2 H2O. The enzyme catalyses 2 H2O2 = O2 + 2 H2O. Functionally, bifunctional enzyme with both catalase and broad-spectrum peroxidase activity. In Emericella nidulans (strain FGSC A4 / ATCC 38163 / CBS 112.46 / NRRL 194 / M139) (Aspergillus nidulans), this protein is Catalase-peroxidase.